Here is a 371-residue protein sequence, read N- to C-terminus: Aldose sugar dehydrogenase YliI (371 aa).

Residues 1–20 form the signal peptide; it reads MHRQSFFLVPLICLSSALWA. Pyrroloquinoline quinone is bound at residue Gln82. The active-site Proton acceptor is the His147. Residues 214 to 215 are PQQ; that stretch reads RN. Ca(2+) is bound by residues Glu240 and Tyr250. Residue Tyr261 participates in pyrroloquinoline quinone binding. 2 PQQ regions span residues 312–314 and 341–343; these read ALK and RIR.

This sequence belongs to the PQQ oxidoreductase GdhB family. In terms of assembly, monomer. Ca(2+) serves as cofactor. It depends on pyrroloquinoline quinone as a cofactor.

It is found in the cell outer membrane. Aldose sugar dehydrogenase with broad substrate specificity. The physiological substrate is unknown. Can oxidize glucose to gluconolactone. Can also utilize D-arabinose, L-arabinose and 2-deoxy-glucose. Has higher activity towards oligomeric sugars, such as maltose, maltotriose or cellobiose. It may function to input sugar-derived electrons into the respiratory network. This chain is Aldose sugar dehydrogenase YliI (yliI), found in Escherichia coli (strain K12).